A 300-amino-acid polypeptide reads, in one-letter code: Ornithine carbamoyltransferase (300 aa).

Residues 50-53 (STRT), glutamine 77, arginine 101, and 128-131 (HPCQ) each bind carbamoyl phosphate. Residues asparagine 159, aspartate 219, and 223–224 (SM) contribute to the L-ornithine site. Residues 257–258 (CL) and arginine 285 contribute to the carbamoyl phosphate site.

It belongs to the aspartate/ornithine carbamoyltransferase superfamily. OTCase family.

It is found in the cytoplasm. The enzyme catalyses carbamoyl phosphate + L-ornithine = L-citrulline + phosphate + H(+). The protein operates within amino-acid degradation; L-arginine degradation via ADI pathway; carbamoyl phosphate from L-arginine: step 2/2. Functionally, reversibly catalyzes the transfer of the carbamoyl group from carbamoyl phosphate (CP) to the N(epsilon) atom of ornithine (ORN) to produce L-citrulline. The protein is Ornithine carbamoyltransferase of Haloquadratum walsbyi (strain DSM 16790 / HBSQ001).